The following is a 223-amino-acid chain: Urease subunit alpha (223 aa).

The tract at residues 1–101 (MHFTQQQLQR…LVTIHEPIAN (101 aa)) is urease gamma. Residues 102–223 (DDKIKAGEIF…LSKAKEKGFL (122 aa)) are urease beta.

The protein in the N-terminal section; belongs to the urease gamma subunit family. In the C-terminal section; belongs to the urease beta subunit family. Heterohexamer of 3 UreA (alpha) and 3 UreB (beta) subunits.

It localises to the cytoplasm. The catalysed reaction is urea + 2 H2O + H(+) = hydrogencarbonate + 2 NH4(+). It functions in the pathway nitrogen metabolism; urea degradation; CO(2) and NH(3) from urea (urease route): step 1/1. This Campylobacter lari protein is Urease subunit alpha.